The primary structure comprises 412 residues: Divalent metal cation transporter MntH (412 aa).

Topologically, residues Met-1–Leu-19 are cytoplasmic. A helical transmembrane segment spans residues Ala-20 to Ala-39. The Periplasmic portion of the chain corresponds to Thr-40–Gln-51. Residues Leu-52–Ala-71 form a helical membrane-spanning segment. Residues Lys-72–Trp-95 are Cytoplasmic-facing. Residues Phe-96–Ile-118 form a helical membrane-spanning segment. Over Gly-119–Gly-125 the chain is Periplasmic. A helical transmembrane segment spans residues Val-126–Leu-145. Topologically, residues Gln-146–Lys-155 are cytoplasmic. The chain crosses the membrane as a helical span at residues Val-156–Ser-175. Topologically, residues Gln-176–Ala-196 are periplasmic. Residues Val-197–Thr-220 traverse the membrane as a helical segment. Residues Gln-221 to Asp-238 lie on the Cytoplasmic side of the membrane. A helical membrane pass occupies residues Val-239 to Ala-258. At Ala-259–Tyr-276 the chain is on the periplasmic side. The chain crosses the membrane as a helical span at residues Leu-277 to Ala-297. Topologically, residues Ala-298–Arg-327 are cytoplasmic. Residues Arg-328–Asp-344 form a helical membrane-spanning segment. The Periplasmic portion of the chain corresponds to Pro-345–Val-350. Residues Met-351–Phe-370 form a helical membrane-spanning segment. At Thr-371–Lys-387 the chain is on the cytoplasmic side. Residues Gln-388–Val-406 form a helical membrane-spanning segment. At Gly-407–Leu-412 the chain is on the periplasmic side.

It belongs to the NRAMP family.

Its subcellular location is the cell inner membrane. In terms of biological role, h(+)-stimulated, divalent metal cation uptake system. The protein is Divalent metal cation transporter MntH of Escherichia coli O9:H4 (strain HS).